A 139-amino-acid polypeptide reads, in one-letter code: Thiosulfate:glutathione sulfurtransferase (139 aa).

A Phosphoserine modification is found at serine 26. The 102-residue stretch at 37–138 (HDPNVVLVDV…WVSHGGDKLD (102 aa)) folds into the Rhodanese domain. Cysteine 98 (cysteine persulfide intermediate) is an active-site residue.

The protein resides in the mitochondrion. It catalyses the reaction thiosulfate + glutathione = S-sulfanylglutathione + sulfite + H(+). With respect to regulation, GSS(-) is a potent inhibitor of RDL1, since the presence of the sulfur dioxygenase strongly increases the RDL1 catalytic activity. Functionally, thiosulfate:glutathione sulfurtransferase (TST) required to produce S-sulfanylglutathione (GSS(-)), a central intermediate in hydrogen sulfide metabolism. Provides the link between the first step in H(2)S metabolism performed by the sulfide:quinone oxidoreductase (SQOR) which catalyzes the conversion of H(2)S to thiosulfate, and the sulfur dioxygenase (SDO) which uses GSS(-) as substrate. The thermodynamic coupling of the irreversible SDO and reversible TST reactions provides a model for the physiologically relevant reaction with thiosulfate as the sulfane donor. The chain is Thiosulfate:glutathione sulfurtransferase (RDL1) from Saccharomyces cerevisiae (strain ATCC 204508 / S288c) (Baker's yeast).